The following is a 188-amino-acid chain: Pyridoxal 5'-phosphate synthase subunit PdxT (188 aa).

46 to 48 (GES) is an L-glutamine binding site. Catalysis depends on Cys-78, which acts as the Nucleophile. Residues Arg-106 and 132 to 133 (IR) contribute to the L-glutamine site. Catalysis depends on charge relay system residues His-169 and Glu-171.

The protein belongs to the glutaminase PdxT/SNO family. As to quaternary structure, in the presence of PdxS, forms a dodecamer of heterodimers. Only shows activity in the heterodimer.

The enzyme catalyses aldehydo-D-ribose 5-phosphate + D-glyceraldehyde 3-phosphate + L-glutamine = pyridoxal 5'-phosphate + L-glutamate + phosphate + 3 H2O + H(+). It catalyses the reaction L-glutamine + H2O = L-glutamate + NH4(+). It participates in cofactor biosynthesis; pyridoxal 5'-phosphate biosynthesis. Its function is as follows. Catalyzes the hydrolysis of glutamine to glutamate and ammonia as part of the biosynthesis of pyridoxal 5'-phosphate. The resulting ammonia molecule is channeled to the active site of PdxS. In Tropheryma whipplei (strain Twist) (Whipple's bacillus), this protein is Pyridoxal 5'-phosphate synthase subunit PdxT.